The following is a 185-amino-acid chain: Ribosome-recycling factor (185 aa).

This sequence belongs to the RRF family.

The protein localises to the cytoplasm. Responsible for the release of ribosomes from messenger RNA at the termination of protein biosynthesis. May increase the efficiency of translation by recycling ribosomes from one round of translation to another. The polypeptide is Ribosome-recycling factor (Pseudomonas fluorescens (strain Pf0-1)).